We begin with the raw amino-acid sequence, 221 residues long: Ribosomal RNA large subunit methyltransferase E (221 aa).

Residues Gly-60, Trp-62, Asp-89, Asp-105, and Asp-134 each coordinate S-adenosyl-L-methionine. Lys-174 serves as the catalytic Proton acceptor.

It belongs to the class I-like SAM-binding methyltransferase superfamily. RNA methyltransferase RlmE family.

The protein localises to the cytoplasm. The enzyme catalyses uridine(2552) in 23S rRNA + S-adenosyl-L-methionine = 2'-O-methyluridine(2552) in 23S rRNA + S-adenosyl-L-homocysteine + H(+). Specifically methylates the uridine in position 2552 of 23S rRNA at the 2'-O position of the ribose in the fully assembled 50S ribosomal subunit. This is Ribosomal RNA large subunit methyltransferase E from Cupriavidus taiwanensis (strain DSM 17343 / BCRC 17206 / CCUG 44338 / CIP 107171 / LMG 19424 / R1) (Ralstonia taiwanensis (strain LMG 19424)).